A 950-amino-acid polypeptide reads, in one-letter code: Glycine dehydrogenase (decarboxylating) (950 aa).

N6-(pyridoxal phosphate)lysine is present on lysine 699.

This sequence belongs to the GcvP family. In terms of assembly, the glycine cleavage system is composed of four proteins: P, T, L and H. It depends on pyridoxal 5'-phosphate as a cofactor.

The catalysed reaction is N(6)-[(R)-lipoyl]-L-lysyl-[glycine-cleavage complex H protein] + glycine + H(+) = N(6)-[(R)-S(8)-aminomethyldihydrolipoyl]-L-lysyl-[glycine-cleavage complex H protein] + CO2. In terms of biological role, the glycine cleavage system catalyzes the degradation of glycine. The P protein binds the alpha-amino group of glycine through its pyridoxal phosphate cofactor; CO(2) is released and the remaining methylamine moiety is then transferred to the lipoamide cofactor of the H protein. This chain is Glycine dehydrogenase (decarboxylating), found in Chromobacterium violaceum (strain ATCC 12472 / DSM 30191 / JCM 1249 / CCUG 213 / NBRC 12614 / NCIMB 9131 / NCTC 9757 / MK).